Reading from the N-terminus, the 275-residue chain is Phosphonoacetaldehyde hydrolase (275 aa).

The Nucleophile role is filled by Asp15. Mg(2+)-binding residues include Asp15 and Ala17. Residue Lys56 is the Schiff-base intermediate with substrate of the active site. Position 189 (Asp189) interacts with Mg(2+).

The protein belongs to the HAD-like hydrolase superfamily. PhnX family. As to quaternary structure, homodimer. Mg(2+) is required as a cofactor.

It carries out the reaction phosphonoacetaldehyde + H2O = acetaldehyde + phosphate + H(+). Involved in phosphonate degradation. In Pseudomonas putida (strain W619), this protein is Phosphonoacetaldehyde hydrolase.